Reading from the N-terminus, the 118-residue chain is Non-specific lipid-transfer protein 2A (118 aa).

Residues 1–26 (MARAQLVLVALVAAALLLAGPHTTMA) form the signal peptide. 4 disulfide bridges follow: cysteine 30–cysteine 77, cysteine 40–cysteine 54, cysteine 55–cysteine 100, and cysteine 75–cysteine 114.

It belongs to the plant LTP family.

Its function is as follows. Plant non-specific lipid-transfer proteins transfer phospholipids as well as galactolipids across membranes. May play a role in wax or cutin deposition in the cell walls of expanding epidermal cells and certain secretory tissues. The sequence is that of Non-specific lipid-transfer protein 2A (LTP2-A) from Oryza sativa subsp. japonica (Rice).